Reading from the N-terminus, the 593-residue chain is UvrABC system protein C (593 aa).

Residues 17-94 (MEPGCYLMKD…IKQYQPRYNI (78 aa)) form the GIY-YIG domain. A UVR domain is found at 199 to 234 (KTILKSLEERMLTASESLDFERAKEYRDLIQHIQNL).

This sequence belongs to the UvrC family. Interacts with UvrB in an incision complex.

The protein localises to the cytoplasm. The UvrABC repair system catalyzes the recognition and processing of DNA lesions. UvrC both incises the 5' and 3' sides of the lesion. The N-terminal half is responsible for the 3' incision and the C-terminal half is responsible for the 5' incision. This Staphylococcus aureus (strain Mu3 / ATCC 700698) protein is UvrABC system protein C.